Consider the following 329-residue polypeptide: Methionyl-tRNA formyltransferase (329 aa).

A (6S)-5,6,7,8-tetrahydrofolate-binding site is contributed by 112-115 (SILP).

It belongs to the Fmt family.

It carries out the reaction L-methionyl-tRNA(fMet) + (6R)-10-formyltetrahydrofolate = N-formyl-L-methionyl-tRNA(fMet) + (6S)-5,6,7,8-tetrahydrofolate + H(+). Functionally, attaches a formyl group to the free amino group of methionyl-tRNA(fMet). The formyl group appears to play a dual role in the initiator identity of N-formylmethionyl-tRNA by promoting its recognition by IF2 and preventing the misappropriation of this tRNA by the elongation apparatus. The sequence is that of Methionyl-tRNA formyltransferase from Shewanella sediminis (strain HAW-EB3).